We begin with the raw amino-acid sequence, 552 residues long: Hydroxylamine reductase (552 aa).

[2Fe-2S] cluster contacts are provided by cysteine 3, cysteine 6, cysteine 18, and cysteine 25. Histidine 250, glutamate 274, cysteine 318, cysteine 406, cysteine 434, cysteine 459, glutamate 493, and lysine 495 together coordinate hybrid [4Fe-2O-2S] cluster. Cysteine 406 is modified (cysteine persulfide).

Belongs to the HCP family. Requires [2Fe-2S] cluster as cofactor. Hybrid [4Fe-2O-2S] cluster is required as a cofactor.

Its subcellular location is the cytoplasm. The enzyme catalyses A + NH4(+) + H2O = hydroxylamine + AH2 + H(+). Its function is as follows. Catalyzes the reduction of hydroxylamine to form NH(3) and H(2)O. This Shewanella woodyi (strain ATCC 51908 / MS32) protein is Hydroxylamine reductase.